The primary structure comprises 1137 residues: Nonsense-mediated mRNA decay factor SMG7 (1137 aa).

S2 carries the post-translational modification N-acetylserine. TPR repeat units follow at residues 152-185 and 187-219; these read QHCL…VPSN and QPYN…KFPF. At S520 the chain carries Phosphoserine. The segment covering 620-631 has biased composition (basic and acidic residues); it reads ELRKTPVSEARK. Disordered regions lie at residues 620-646, 696-794, 890-911, 988-1055, 1069-1089, and 1104-1137; these read ELRK…NSQF, LQPT…YQQA, IDRR…VPRM, PSLP…AMGG, SSWH…PSME, and SSSM…NPPH. T624 is subject to Phosphothreonine. 2 stretches are compositionally biased toward polar residues: residues 633–646 and 696–722; these read PVTQ…NSQF and LQPT…SQQR. Residues 723–770 are compositionally biased toward low complexity; that stretch reads PSGPGPMNQGPQQSQPPSQQPLTSLPAQPTAQSTSQLQVQALTQQQQS. Phosphoserine is present on residues S781 and S897. A compositionally biased stretch (polar residues) spans 988 to 998; sequence PSLPASSDHST. Residues 999 to 1025 show a composition bias toward low complexity; that stretch reads PASQSPHSSNPSSLPSSPPTHNHNSVP. Positions 1036–1050 are enriched in basic and acidic residues; that stretch reads DNRDRRTADRWKTDK. Residues 1069 to 1081 are compositionally biased toward polar residues; sequence SSWHQASTPSGTW. Low complexity predominate over residues 1117–1131; it reads QLLMQQKQKQQRGQG.

Part of a complex that contains SMG5, SMG7, PPP2CA, a short isoform of UPF3A (isoform UPF3AS, but not isoform UPF3AL) and phosphorylated UPF1. Interacts with DHX34; the interaction is RNA-independent.

The protein localises to the cytoplasm. The protein resides in the nucleus. Functionally, plays a role in nonsense-mediated mRNA decay. Recruits UPF1 to cytoplasmic mRNA decay bodies. Together with SMG5 is thought to provide a link to the mRNA degradation machinery involving exonucleolytic pathways, and to serve as an adapter for UPF1 to protein phosphatase 2A (PP2A), thereby triggering UPF1 dephosphorylation. The protein is Nonsense-mediated mRNA decay factor SMG7 of Homo sapiens (Human).